The primary structure comprises 590 residues: UvrABC system protein C (590 aa).

A GIY-YIG domain is found at 14–91; it reads DQPGCYLMKD…IKKHDPKYNV (78 aa). The 36-residue stretch at 196–231 folds into the UVR domain; sequence NEVKKELEEKMHEAAENLEFERAKELRDQIAHIEST.

Belongs to the UvrC family. As to quaternary structure, interacts with UvrB in an incision complex.

It localises to the cytoplasm. Its function is as follows. The UvrABC repair system catalyzes the recognition and processing of DNA lesions. UvrC both incises the 5' and 3' sides of the lesion. The N-terminal half is responsible for the 3' incision and the C-terminal half is responsible for the 5' incision. The polypeptide is UvrABC system protein C (Bacillus subtilis (strain 168)).